The chain runs to 245 residues: 23S rRNA (guanosine-2'-O-)-methyltransferase RlmB (245 aa).

Residues Gly197, Ile217, and Leu226 each coordinate S-adenosyl-L-methionine.

It belongs to the class IV-like SAM-binding methyltransferase superfamily. RNA methyltransferase TrmH family. RlmB subfamily.

Its subcellular location is the cytoplasm. The enzyme catalyses guanosine(2251) in 23S rRNA + S-adenosyl-L-methionine = 2'-O-methylguanosine(2251) in 23S rRNA + S-adenosyl-L-homocysteine + H(+). Specifically methylates the ribose of guanosine 2251 in 23S rRNA. The protein is 23S rRNA (guanosine-2'-O-)-methyltransferase RlmB of Bordetella parapertussis (strain 12822 / ATCC BAA-587 / NCTC 13253).